The sequence spans 87 residues: Small ribosomal subunit protein uS17 (87 aa).

Belongs to the universal ribosomal protein uS17 family. In terms of assembly, part of the 30S ribosomal subunit.

In terms of biological role, one of the primary rRNA binding proteins, it binds specifically to the 5'-end of 16S ribosomal RNA. This chain is Small ribosomal subunit protein uS17, found in Bacillus cereus (strain ATCC 14579 / DSM 31 / CCUG 7414 / JCM 2152 / NBRC 15305 / NCIMB 9373 / NCTC 2599 / NRRL B-3711).